The chain runs to 147 residues: 3-dehydroquinate dehydratase (147 aa).

The active-site Proton acceptor is Y24. Substrate-binding residues include N75, H81, and D88. H101 (proton donor) is an active-site residue. Substrate contacts are provided by residues 102–103 (IS) and R112.

The protein belongs to the type-II 3-dehydroquinase family. In terms of assembly, homododecamer.

The catalysed reaction is 3-dehydroquinate = 3-dehydroshikimate + H2O. It participates in metabolic intermediate biosynthesis; chorismate biosynthesis; chorismate from D-erythrose 4-phosphate and phosphoenolpyruvate: step 3/7. Functionally, catalyzes a trans-dehydration via an enolate intermediate. This chain is 3-dehydroquinate dehydratase, found in Cereibacter sphaeroides (strain ATCC 17029 / ATH 2.4.9) (Rhodobacter sphaeroides).